A 183-amino-acid chain; its full sequence is Crossover junction endodeoxyribonuclease RuvC (183 aa).

Residues Asp7, Glu66, and Asp138 contribute to the active site. 3 residues coordinate Mg(2+): Asp7, Glu66, and Asp138.

Belongs to the RuvC family. In terms of assembly, homodimer which binds Holliday junction (HJ) DNA. The HJ becomes 2-fold symmetrical on binding to RuvC with unstacked arms; it has a different conformation from HJ DNA in complex with RuvA. In the full resolvosome a probable DNA-RuvA(4)-RuvB(12)-RuvC(2) complex forms which resolves the HJ. Mg(2+) serves as cofactor.

Its subcellular location is the cytoplasm. The enzyme catalyses Endonucleolytic cleavage at a junction such as a reciprocal single-stranded crossover between two homologous DNA duplexes (Holliday junction).. Its function is as follows. The RuvA-RuvB-RuvC complex processes Holliday junction (HJ) DNA during genetic recombination and DNA repair. Endonuclease that resolves HJ intermediates. Cleaves cruciform DNA by making single-stranded nicks across the HJ at symmetrical positions within the homologous arms, yielding a 5'-phosphate and a 3'-hydroxyl group; requires a central core of homology in the junction. The consensus cleavage sequence is 5'-(A/T)TT(C/G)-3'. Cleavage occurs on the 3'-side of the TT dinucleotide at the point of strand exchange. HJ branch migration catalyzed by RuvA-RuvB allows RuvC to scan DNA until it finds its consensus sequence, where it cleaves and resolves the cruciform DNA. This chain is Crossover junction endodeoxyribonuclease RuvC, found in Burkholderia ambifaria (strain MC40-6).